The following is a 246-amino-acid chain: NH(3)-dependent NAD(+) synthetase (246 aa).

29 to 36 contributes to the ATP binding site; it reads GLSGGIDS. Residue D35 coordinates Mg(2+). R110 is a binding site for deamido-NAD(+). T130 is an ATP binding site. E135 lines the Mg(2+) pocket. ATP-binding residues include K159 and S181.

This sequence belongs to the NAD synthetase family. As to quaternary structure, homodimer.

The catalysed reaction is deamido-NAD(+) + NH4(+) + ATP = AMP + diphosphate + NAD(+) + H(+). Its pathway is cofactor biosynthesis; NAD(+) biosynthesis; NAD(+) from deamido-NAD(+) (ammonia route): step 1/1. Functionally, catalyzes the ATP-dependent amidation of deamido-NAD to form NAD. Uses ammonia as a nitrogen source. The protein is NH(3)-dependent NAD(+) synthetase of Campylobacter jejuni subsp. doylei (strain ATCC BAA-1458 / RM4099 / 269.97).